We begin with the raw amino-acid sequence, 142 residues long: MVLSAADKSNVKAAWGKVGGNAGAYGAEALERMFLSFPTTKTYFPHFDLSHGSAQVKGHGEKVAAALTKAVGHLDDLPGTLSDLSDLHAHKLRVDPVNFKLLSHSLLVTLACHLPNDFTPAVHASLDKFLANVSTVLTSKYR.

The Globin domain occupies 2-142; it reads VLSAADKSNV…VSTVLTSKYR (141 aa). Histidine 59 is an O2 binding site. Histidine 88 serves as a coordination point for heme b.

Belongs to the globin family. Heterotetramer of two alpha chains and two beta chains.

Functionally, involved in oxygen transport from the lung to the various peripheral tissues. Its function is as follows. Hemopressin acts as an antagonist peptide of the cannabinoid receptor CNR1. Hemopressin-binding efficiently blocks cannabinoid receptor CNR1 and subsequent signaling. The sequence is that of Hemoglobin subunit alpha-1 (HBA1) from Capra hircus (Goat).